Reading from the N-terminus, the 471-residue chain is ATP synthase subunit beta (471 aa).

Residue 154-161 (GGAGVGKT) coordinates ATP.

This sequence belongs to the ATPase alpha/beta chains family. As to quaternary structure, F-type ATPases have 2 components, CF(1) - the catalytic core - and CF(0) - the membrane proton channel. CF(1) has five subunits: alpha(3), beta(3), gamma(1), delta(1), epsilon(1). CF(0) has three main subunits: a(1), b(2) and c(9-12). The alpha and beta chains form an alternating ring which encloses part of the gamma chain. CF(1) is attached to CF(0) by a central stalk formed by the gamma and epsilon chains, while a peripheral stalk is formed by the delta and b chains.

It localises to the cell membrane. The enzyme catalyses ATP + H2O + 4 H(+)(in) = ADP + phosphate + 5 H(+)(out). Functionally, produces ATP from ADP in the presence of a proton gradient across the membrane. The catalytic sites are hosted primarily by the beta subunits. The sequence is that of ATP synthase subunit beta from Mesomycoplasma hyopneumoniae (strain J / ATCC 25934 / NCTC 10110) (Mycoplasma hyopneumoniae).